The primary structure comprises 180 residues: Non-specific lipid transfer protein GPI-anchored 3 (180 aa).

Residues M1 to A22 form the signal peptide. 4 disulfides stabilise this stretch: C41-C78, C48-C62, C63-C104, and C76-C113. N-linked (GlcNAc...) asparagine glycosylation is found at N91 and N120. 2 stretches are compositionally biased toward low complexity: residues S116–P125 and P133–P156. The segment at S116–P156 is disordered. S158 carries GPI-anchor amidated serine lipidation. Positions S159–F180 are cleaved as a propeptide — removed in mature form.

Belongs to the plant LTP family. As to expression, restricted to stamen, pollen and sporophytic tissues. Also detected, at low levels, in stems and leaves.

The protein resides in the cell membrane. Functionally, lipid transfer protein involved in seed and ovule maturation and development, probably by regulating the fatty acids homeostasis during suberin and sporopollenin biosynthesis or deposition. In Arabidopsis thaliana (Mouse-ear cress), this protein is Non-specific lipid transfer protein GPI-anchored 3.